A 79-amino-acid polypeptide reads, in one-letter code: ESX secretion system protein YukD (79 aa).

It belongs to the EsaB family.

Required for YukE secretion. Probable component or regulator of the ESX/ESAT-6-like secretion system (BsEss). This chain is ESX secretion system protein YukD (yukD), found in Bacillus subtilis (strain 168).